A 366-amino-acid chain; its full sequence is Chorismate synthase (366 aa).

The NADP(+) site is built by R48 and R54. FMN contacts are provided by residues 131-133 (RAS), 243-244 (NA), G288, 303-307 (KPTPS), and R329.

It belongs to the chorismate synthase family. As to quaternary structure, homotetramer. FMNH2 is required as a cofactor.

It catalyses the reaction 5-O-(1-carboxyvinyl)-3-phosphoshikimate = chorismate + phosphate. It participates in metabolic intermediate biosynthesis; chorismate biosynthesis; chorismate from D-erythrose 4-phosphate and phosphoenolpyruvate: step 7/7. In terms of biological role, catalyzes the anti-1,4-elimination of the C-3 phosphate and the C-6 proR hydrogen from 5-enolpyruvylshikimate-3-phosphate (EPSP) to yield chorismate, which is the branch point compound that serves as the starting substrate for the three terminal pathways of aromatic amino acid biosynthesis. This reaction introduces a second double bond into the aromatic ring system. The chain is Chorismate synthase from Bartonella quintana (strain Toulouse) (Rochalimaea quintana).